A 268-amino-acid chain; its full sequence is 3-deoxy-manno-octulosonate cytidylyltransferase (268 aa).

It belongs to the KdsB family.

The protein localises to the cytoplasm. It catalyses the reaction 3-deoxy-alpha-D-manno-oct-2-ulosonate + CTP = CMP-3-deoxy-beta-D-manno-octulosonate + diphosphate. Its pathway is nucleotide-sugar biosynthesis; CMP-3-deoxy-D-manno-octulosonate biosynthesis; CMP-3-deoxy-D-manno-octulosonate from 3-deoxy-D-manno-octulosonate and CTP: step 1/1. It participates in bacterial outer membrane biogenesis; lipopolysaccharide biosynthesis. In terms of biological role, activates KDO (a required 8-carbon sugar) for incorporation into bacterial lipopolysaccharide in Gram-negative bacteria. This chain is 3-deoxy-manno-octulosonate cytidylyltransferase, found in Psychrobacter cryohalolentis (strain ATCC BAA-1226 / DSM 17306 / VKM B-2378 / K5).